A 461-amino-acid chain; its full sequence is ATP synthase subunit beta (461 aa).

ATP is bound at residue 151–158 (GGAGVGKT).

The protein belongs to the ATPase alpha/beta chains family. As to quaternary structure, F-type ATPases have 2 components, CF(1) - the catalytic core - and CF(0) - the membrane proton channel. CF(1) has five subunits: alpha(3), beta(3), gamma(1), delta(1), epsilon(1). CF(0) has three main subunits: a(1), b(2) and c(9-12). The alpha and beta chains form an alternating ring which encloses part of the gamma chain. CF(1) is attached to CF(0) by a central stalk formed by the gamma and epsilon chains, while a peripheral stalk is formed by the delta and b chains.

The protein resides in the cell inner membrane. It carries out the reaction ATP + H2O + 4 H(+)(in) = ADP + phosphate + 5 H(+)(out). Produces ATP from ADP in the presence of a proton gradient across the membrane. The catalytic sites are hosted primarily by the beta subunits. This chain is ATP synthase subunit beta, found in Pseudoalteromonas translucida (strain TAC 125).